Reading from the N-terminus, the 311-residue chain is MDIVFMGTPDFAANILQKLIEEPQFNIKLVVTQPDKPVGRKQILTPPPVKEFALKFNLNVVQPDRLKGNEEFFEVLKKINPEVIVVVAYGKILPKEILQIPKYGCINVHASLLPEYRGAAPIQRVLMDGKNYTGITIMKMDEGLDTGDILLQEGIEIEQNDDVITLSKKLSELGAKLLIETLKNISNIVPVKQDATKATYAPPIDKKEGQISWDMSAVQIYNRFRALKIWPGIFTIYKGKLLKIHEMEIAKLDNLENVQNGTILGINETGILVKVKDGVIKLKELQLEGGRKMSARDFVNGYKIKKGDILS.

111–114 (SLLP) contacts (6S)-5,6,7,8-tetrahydrofolate.

It belongs to the Fmt family.

The catalysed reaction is L-methionyl-tRNA(fMet) + (6R)-10-formyltetrahydrofolate = N-formyl-L-methionyl-tRNA(fMet) + (6S)-5,6,7,8-tetrahydrofolate + H(+). Attaches a formyl group to the free amino group of methionyl-tRNA(fMet). The formyl group appears to play a dual role in the initiator identity of N-formylmethionyl-tRNA by promoting its recognition by IF2 and preventing the misappropriation of this tRNA by the elongation apparatus. In Caldicellulosiruptor saccharolyticus (strain ATCC 43494 / DSM 8903 / Tp8T 6331), this protein is Methionyl-tRNA formyltransferase.